The primary structure comprises 372 residues: Neutral protease 2 homolog MGYG_06241 (372 aa).

The first 19 residues, 1-19 (MQFFTAIAAISALVAPALA), serve as a signal peptide directing secretion. A propeptide spanning residues 20 to 188 (LPTQELPQAP…THFAGTLNRR (169 aa)) is cleaved from the precursor. 2 disulfide bridges follow: C195–C264 and C271–C289. H313 serves as a coordination point for Zn(2+). E314 is a catalytic residue. Residues H317 and D328 each contribute to the Zn(2+) site.

It belongs to the peptidase M35 family. Requires Zn(2+) as cofactor.

Its subcellular location is the secreted. The catalysed reaction is Preferential cleavage of bonds with hydrophobic residues in P1'. Also 3-Asn-|-Gln-4 and 8-Gly-|-Ser-9 bonds in insulin B chain.. Its function is as follows. Secreted metalloproteinase that allows assimilation of proteinaceous substrates. Shows high activities on basic nuclear substrates such as histone and protamine. May be involved in virulence. This Arthroderma gypseum (strain ATCC MYA-4604 / CBS 118893) (Microsporum gypseum) protein is Neutral protease 2 homolog MGYG_06241.